A 283-amino-acid polypeptide reads, in one-letter code: Plasma membrane ascorbate-dependent reductase CYBRD1 (283 aa).

Over 1 to 5 the chain is Cytoplasmic; it reads MEGYK. Residues 6–30 traverse the membrane as a helical segment; sequence SFLVFLVSSLLLGFLGVIFTLVWVL. In terms of domain architecture, Cytochrome b561 spans 13–218; the sequence is SSLLLGFLGV…FGGLVVWMVT (206 aa). Topologically, residues 31–45 are extracellular; that stretch reads HWREGLGWDGGAAEF. Residues 46–67 traverse the membrane as a helical segment; sequence NWHPVLVTSGFIFIQGIAIIVY. Heme b contacts are provided by His48, Arg68, and Lys77. At 68–76 the chain is on the cytoplasmic side; the sequence is RLPWTWNCS. The L-ascorbate site is built by Lys77 and Lys81. The helical transmembrane segment at 77-103 threads the bilayer; that stretch reads KLLMKFIHAGLHLTAFVFTIVALVAVF. Heme b is bound at residue His84. Topologically, residues 104 to 116 are extracellular; sequence DFHNAKNIPNMYS. His106 is a Fe(3+) binding site. Heme b is bound by residues 113–116 and His118; that span reads NMYS. The helical transmembrane segment at 117-142 threads the bilayer; it reads LHSWIGLTVVILYALQLVLGVSIYLL. Residues 143–149 lie on the Cytoplasmic side of the membrane; the sequence is PFARDTL. Arg150 contributes to the L-ascorbate binding site. The chain crosses the membrane as a helical span at residues 150 to 177; the sequence is RAALMPVHVYSGLLIFGTVIATALMGIT. The heme b site is built by His157 and Glu178. Over 178-195 the chain is Extracellular; sequence EKLIFSLKEPPYSKMPPE. A helical transmembrane segment spans residues 196–220; sequence AIFVNTFGLIILVFGGLVVWMVTTP. The Cytoplasmic segment spans residues 221–283; that stretch reads AWKRPREQEI…LDDAGQRSTM (63 aa). A heme b-binding site is contributed by Lys223. The tract at residues 234–263 is disordered; it reads NPTVSSPDGTEEGSTITDCSNTEKSDVELN. A compositionally biased stretch (polar residues) spans 235-253; the sequence is PTVSSPDGTEEGSTITDCS. Basic and acidic residues predominate over residues 254–263; the sequence is NTEKSDVELN.

As to quaternary structure, homodimer. The cofactor is heme b.

It localises to the cell membrane. The protein resides in the apical cell membrane. The catalysed reaction is Fe(3+)(out) + L-ascorbate(in) = monodehydro-L-ascorbate radical(in) + Fe(2+)(out) + H(+). The enzyme catalyses Cu(2+)(out) + L-ascorbate(in) = Cu(+)(out) + monodehydro-L-ascorbate radical(in) + H(+). It carries out the reaction monodehydro-L-ascorbate radical(out) + L-ascorbate(in) = monodehydro-L-ascorbate radical(in) + L-ascorbate(out). Plasma membrane reductase that uses cytoplasmic ascorbate as an electron donor to reduce extracellular Fe(3+) into Fe(2+). It is also able to reduce extracellular monodehydro-L-ascorbate and may be involved in extracellular ascorbate regeneration. May also function as a cupric transmembrane reductase. The polypeptide is Plasma membrane ascorbate-dependent reductase CYBRD1 (cybrd1) (Xenopus tropicalis (Western clawed frog)).